Consider the following 1368-residue polypeptide: DNA-directed RNA polymerase subunit beta (1368 aa).

This sequence belongs to the RNA polymerase beta chain family. As to quaternary structure, the RNAP catalytic core consists of 2 alpha, 1 beta, 1 beta' and 1 omega subunit. When a sigma factor is associated with the core the holoenzyme is formed, which can initiate transcription.

The enzyme catalyses RNA(n) + a ribonucleoside 5'-triphosphate = RNA(n+1) + diphosphate. Functionally, DNA-dependent RNA polymerase catalyzes the transcription of DNA into RNA using the four ribonucleoside triphosphates as substrates. The chain is DNA-directed RNA polymerase subunit beta from Paraburkholderia xenovorans (strain LB400).